Reading from the N-terminus, the 284-residue chain is Asialoglycoprotein receptor 1 (284 aa).

Over 1–39 the chain is Cytoplasmic; that stretch reads MTKDYQDFQHLDNENDHHQLQRGPPPAPRLLQRLCSGFR. The Endocytosis signal motif lies at 5–8; the sequence is YQDF. C35 carries S-palmitoyl cysteine lipidation. A helical; Signal-anchor for type II membrane protein transmembrane segment spans residues 40–60; that stretch reads LFLLSLGLSILLLVVVCVITS. Residues 58 to 122 are a coiled coil; that stretch reads ITSQNSQLRE…EDLREDHSRL (65 aa). Over 61–284 the chain is Extracellular; sequence QNSQLREDLR…VCETELGKAN (224 aa). N-linked (GlcNAc...) asparagine glycans are attached at residues N75, N78, and N146. Cystine bridges form between C153-C164, C181-C276, and C254-C268. One can recognise a C-type lectin domain in the interval 160–277; that stretch reads YEGSCYWFSS…CRRPYRWVCE (118 aa). Residues V190, E196, D215, Q239, D241, D242, E252, D253, N264, D265, and E277 each coordinate Ca(2+).

Interacts with LASS2. Post-translationally, phosphorylated on a cytoplasmic Ser residue. Expressed exclusively in hepatic parenchymal cells.

The protein localises to the membrane. Functionally, mediates the endocytosis of plasma glycoproteins to which the terminal sialic acid residue on their complex carbohydrate moieties has been removed. The receptor recognizes terminal galactose and N-acetylgalactosamine units. After ligand binding to the receptor, the resulting complex is internalized and transported to a sorting organelle, where receptor and ligand are disassociated. The receptor then returns to the cell membrane surface. The chain is Asialoglycoprotein receptor 1 (Asgr1) from Rattus norvegicus (Rat).